Consider the following 403-residue polypeptide: Synaptotagmin-7 (403 aa).

Topologically, residues 1 to 16 are vesicular; sequence MYRDPEAASPGAPSRD. A helical membrane pass occupies residues 17-37; it reads VLLVSAIITVSLSVTVVLCGL. Over 38 to 403 the chain is Cytoplasmic; that stretch reads CHWCQRKLGK…PVAQWHQLKA (366 aa). A Phosphoserine modification is found at S52. Residues 53 to 106 are disordered; that stretch reads LETVGTPDSGRGRSEKKAIKLPAGGKAVNTAPVPGQTPHDESDRRTEPRSSVSD. At T58 the chain carries Phosphothreonine. S61 is modified (phosphoserine). Basic and acidic residues predominate over residues 90-100; it reads PHDESDRRTEP. Residues S119 and S122 each carry the phosphoserine modification. C2 domains are found at residues 135–255 and 266–399; these read NLGR…TFWK and SRGE…AQWH. Residues D166, D172, D225, D227, S230, D233, D297, D303, D357, D359, S362, and D365 each contribute to the Ca(2+) site.

Belongs to the synaptotagmin family. In terms of assembly, homodimer. Can also form heterodimers with SYT6, SYT9 and SYT10. Interacts with calmodulin (CALM1, CALM2 or CALM3). Interacts with CD63; required for localization to lysosomes. Interacts with APP. The cofactor is Ca(2+). Palmitoylated at its vesicular N-terminus; palmitoylation is required for localization to lysosome and phagocytosis in macrophages. As to expression, expressed in a variety of adult and fetal tissues.

The protein resides in the cell membrane. Its subcellular location is the presynaptic cell membrane. It is found in the cytoplasmic vesicle. The protein localises to the secretory vesicle. It localises to the synaptic vesicle membrane. The protein resides in the lysosome membrane. Its subcellular location is the phagosome membrane. It is found in the peroxisome membrane. The protein localises to the secretory vesicle membrane. In terms of biological role, ca(2+) sensor involved in Ca(2+)-dependent exocytosis of secretory and synaptic vesicles through Ca(2+) and phospholipid binding to the C2 domain. Ca(2+) induces binding of the C2-domains to phospholipid membranes and to assembled SNARE-complexes; both actions contribute to triggering exocytosis. SYT7 binds Ca(2+) with high affinity and slow kinetics compared to other synaptotagmins. Involved in Ca(2+)-triggered lysosomal exocytosis, a major component of the plasma membrane repair. Ca(2+)-regulated delivery of lysosomal membranes to the cell surface is also involved in the phagocytic uptake of particles by macrophages. Ca(2+)-triggered lysosomal exocytosis also plays a role in bone remodeling by regulating secretory pathways in osteoclasts and osteoblasts. In case of infection, involved in participates cell invasion by Trypanosoma cruzi via Ca(2+)-triggered lysosomal exocytosis. Involved in cholesterol transport from lysosome to peroxisome by promoting membrane contacts between lysosomes and peroxisomes: probably acts by promoting vesicle fusion by binding phosphatidylinositol-4,5-bisphosphate on peroxisomal membranes. Acts as a key mediator of synaptic facilitation, a process also named short-term synaptic potentiation: synaptic facilitation takes place at synapses with a low initial release probability and is caused by influx of Ca(2+) into the axon terminal after spike generation, increasing the release probability of neurotransmitters. Probably mediates synaptic facilitation by directly increasing the probability of release. May also contribute to synaptic facilitation by regulating synaptic vesicle replenishment, a process required to ensure that synaptic vesicles are ready for the arrival of the next action potential: SYT7 is required for synaptic vesicle replenishment by acting as a sensor for Ca(2+) and by forming a complex with calmodulin. Also acts as a regulator of Ca(2+)-dependent insulin and glucagon secretion in beta-cells. Triggers exocytosis by promoting fusion pore opening and fusion pore expansion in chromaffin cells. Also regulates the secretion of some non-synaptic secretory granules of specialized cells. The sequence is that of Synaptotagmin-7 from Homo sapiens (Human).